The sequence spans 353 residues: UPF0283 membrane protein YcjF (353 aa).

Transmembrane regions (helical) follow at residues 70 to 90 (MVMGGLALFGASVVGQGVQWT), 100 to 120 (VALGGCAAGALIIGAGVGSVV), and 213 to 233 (ESTLMIAVSPLALVDMAFIAW).

The protein belongs to the UPF0283 family.

It localises to the cell inner membrane. The chain is UPF0283 membrane protein YcjF from Escherichia coli O45:K1 (strain S88 / ExPEC).